Consider the following 646-residue polypeptide: Threonine--tRNA ligase (646 aa).

A TGS domain is found at 1–63 (MAQISLTFPD…ETDAKIAIHT (63 aa)). The interval 247 to 544 (DHRKLGREME…LIENYAGKLP (298 aa)) is catalytic. Residues Cys-344, His-395, and His-521 each contribute to the Zn(2+) site.

The protein belongs to the class-II aminoacyl-tRNA synthetase family. Homodimer. Zn(2+) is required as a cofactor.

Its subcellular location is the cytoplasm. The enzyme catalyses tRNA(Thr) + L-threonine + ATP = L-threonyl-tRNA(Thr) + AMP + diphosphate + H(+). In terms of biological role, catalyzes the attachment of threonine to tRNA(Thr) in a two-step reaction: L-threonine is first activated by ATP to form Thr-AMP and then transferred to the acceptor end of tRNA(Thr). Also edits incorrectly charged L-seryl-tRNA(Thr). This Cereibacter sphaeroides (strain ATCC 17023 / DSM 158 / JCM 6121 / CCUG 31486 / LMG 2827 / NBRC 12203 / NCIMB 8253 / ATH 2.4.1.) (Rhodobacter sphaeroides) protein is Threonine--tRNA ligase.